A 74-amino-acid chain; its full sequence is Conotoxin Vc6.8 (74 aa).

Residues 1 to 19 form the signal peptide; the sequence is MEKLTILLLVAAVLMSTQA. The propeptide occupies 20-34; sequence LMQEQRQKAKINLFS. 3 disulfide bridges follow: Cys49/Cys62, Cys55/Cys66, and Cys61/Cys70.

This sequence belongs to the conotoxin O2 superfamily. Expressed by the venom duct.

It is found in the secreted. Functionally, inhibits voltage-gated ion channels. The protein is Conotoxin Vc6.8 of Conus victoriae (Queen Victoria cone).